The chain runs to 399 residues: 3-methyl-2-oxobutanoate hydroxymethyltransferase 2, mitochondrial (399 aa).

Residues M1 to R90 constitute a mitochondrion transit peptide. The Mg(2+) site is built by D125 and D164. Residues D125–S126, D164, and K194 contribute to the 3-methyl-2-oxobutanoate site. E196 provides a ligand contact to Mg(2+). E264 functions as the Proton acceptor in the catalytic mechanism.

This sequence belongs to the PanB family. It depends on Mg(2+) as a cofactor.

It is found in the mitochondrion. It carries out the reaction 3-methyl-2-oxobutanoate + (6R)-5,10-methylene-5,6,7,8-tetrahydrofolate + H2O = 2-dehydropantoate + (6S)-5,6,7,8-tetrahydrofolate. Its pathway is cofactor biosynthesis; (R)-pantothenate biosynthesis; (R)-pantoate from 3-methyl-2-oxobutanoate: step 1/2. In terms of biological role, catalyzes the reversible reaction in which hydroxymethyl group from 5,10-methylenetetrahydrofolate is transferred onto alpha-ketoisovalerate to form ketopantoate. In Oryza sativa subsp. japonica (Rice), this protein is 3-methyl-2-oxobutanoate hydroxymethyltransferase 2, mitochondrial (KPHMT2).